A 156-amino-acid chain; its full sequence is Ribosome maturation factor RimP (156 aa).

It belongs to the RimP family.

It is found in the cytoplasm. Required for maturation of 30S ribosomal subunits. This is Ribosome maturation factor RimP from Halalkalibacterium halodurans (strain ATCC BAA-125 / DSM 18197 / FERM 7344 / JCM 9153 / C-125) (Bacillus halodurans).